The primary structure comprises 144 residues: Large ribosomal subunit protein uL11 (144 aa).

It belongs to the universal ribosomal protein uL11 family. In terms of assembly, part of the ribosomal stalk of the 50S ribosomal subunit. Interacts with L10 and the large rRNA to form the base of the stalk. L10 forms an elongated spine to which L12 dimers bind in a sequential fashion forming a multimeric L10(L12)X complex. In terms of processing, one or more lysine residues are methylated.

Its function is as follows. Forms part of the ribosomal stalk which helps the ribosome interact with GTP-bound translation factors. The protein is Large ribosomal subunit protein uL11 of Corynebacterium glutamicum (strain R).